A 364-amino-acid chain; its full sequence is Uroporphyrinogen decarboxylase (364 aa).

Substrate is bound by residues 28 to 32 (RQAGR), D78, Y160, T215, and H333.

This sequence belongs to the uroporphyrinogen decarboxylase family. Homodimer.

It localises to the cytoplasm. It catalyses the reaction uroporphyrinogen III + 4 H(+) = coproporphyrinogen III + 4 CO2. Its pathway is porphyrin-containing compound metabolism; protoporphyrin-IX biosynthesis; coproporphyrinogen-III from 5-aminolevulinate: step 4/4. Its function is as follows. Catalyzes the decarboxylation of four acetate groups of uroporphyrinogen-III to yield coproporphyrinogen-III. The protein is Uroporphyrinogen decarboxylase of Burkholderia pseudomallei (strain 1106a).